The sequence spans 1252 residues: Calmodulin-regulated spectrin-associated protein 3 (1252 aa).

Disordered stretches follow at residues 183–205 (KTEQ…SPAQ), 331–385 (HAVS…SMSH), 429–457 (SVSS…ESGD), 479–604 (GAAD…MSEL), 638–697 (FLQV…LGDY), 712–935 (QRDM…EAAR), 962–981 (TTRA…GDFT), 996–1030 (DLDK…DDSA), and 1063–1114 (PNNL…TGPR). A Phosphothreonine modification is found at T184. At S193 the chain carries Phosphoserine. The Calponin-homology (CH) domain occupies 203 to 312 (PAQPSIRYRK…LVVLLAEMYM (110 aa)). 6 positions are modified to phosphoserine: S334, S347, S351, S368, S373, and S382. The span at 335-353 (PRNTETVPSQNNSGSSSPV) shows a compositional bias: polar residues. Over residues 359–373 (PLLSPGGPQSPLRGS) the composition is skewed to low complexity. Polar residues-rich tracts occupy residues 374–383 (TGSLKSSPSM), 441–450 (VSTSSRNSAQ), and 525–534 (ENPSKSSPCS). Phosphoserine is present on residues S548, S555, and S561. Residues 569–580 (AERKKQLVKAEA) are compositionally biased toward basic and acidic residues. Positions 595–629 (EALSSEMSELGARLEEKRRAIEAQKRRIEAIFAKH) form a coiled coil. S683 carries the phosphoserine modification. Residues 696-727 (DYNRAVSKLSAALSSLQRDMQRLTDQQQRLLA) are a coiled coil. The span at 729-739 (PEAPGPAPPPA) shows a compositional bias: pro residues. Positions 740 to 768 (AWVIPGPATGPKAASPSPARRAPAARRSP) are enriched in low complexity. Phosphoserine is present on S767. The residue at position 797 (T797) is a Phosphothreonine. 2 positions are modified to phosphoserine: S812 and S881. A compositionally biased stretch (polar residues) spans 812–825 (SPSQVPVQTRSSIL). Positions 887 to 934 (YKDEDKPEDEMAQKRASLLERQQRRVEEARRRKQWQEAEKEQKREEAA) are enriched in basic and acidic residues. A coiled-coil region spans residues 896-943 (EMAQKRASLLERQQRRVEEARRRKQWQEAEKEQKREEAARLAQEAPGL). Phosphoserine is present on S1077. One can recognise a CKK domain in the interval 1112–1246 (GPRLYKEPSA…QSKKPTTPKK (135 aa)).

This sequence belongs to the CAMSAP1 family. As to quaternary structure, interacts with PLEKHA7. Interacts with CAMSAP2. Interacts with KATNA1 and KATNB1; leading to regulate the length of CAMSAP3-decorated microtubule stretches. Interacts with AKAP9; regulating Golgi assembly in epithelial cells. Interacts with MACF1. Interacts with isoform C of CDH23; leading to inhibit CAMSAP3 ability to induce microtubule bundle formation. Interacts with AKNA. Expressed at the apical surface of respiratory epithelia, as well as in the acini of submucosal glands (at protein level). In cochlea, restricted to the organ of Corti and increases during development (at protein level). Highly expressed in both sensory hair cells and supporting cells.

The protein resides in the cytoplasm. The protein localises to the cytoskeleton. Its subcellular location is the cell junction. It localises to the adherens junction. It is found in the cilium axoneme. The protein resides in the cilium basal body. Functionally, key microtubule-organizing protein that specifically binds the minus-end of non-centrosomal microtubules and regulates their dynamics and organization. Specifically recognizes growing microtubule minus-ends and autonomously decorates and stabilizes microtubule lattice formed by microtubule minus-end polymerization. Acts on free microtubule minus-ends that are not capped by microtubule-nucleating proteins or other factors and protects microtubule minus-ends from depolymerization. In addition, it also reduces the velocity of microtubule polymerization. Required for the biogenesis and the maintenance of zonula adherens by anchoring the minus-end of microtubules to zonula adherens and by recruiting the kinesin KIFC3 to those junctional sites. Required for orienting the apical-to-basal polarity of microtubules in epithelial cells: acts by tethering non-centrosomal microtubules to the apical cortex, leading to their longitudinal orientation. Plays a key role in early embryos, which lack centrosomes: accumulates at the microtubule bridges that connect pairs of cells and enables the formation of a non-centrosomal microtubule-organizing center that directs intracellular transport in the early embryo. Couples non-centrosomal microtubules with actin: interaction with MACF1 at the minus ends of non-centrosomal microtubules, tethers the microtubules to actin filaments, regulating focal adhesion size and cell migration. Plays a key role in the generation of non-centrosomal microtubules by accumulating in the pericentrosomal region and cooperating with KATNA1 to release non-centrosomal microtubules from the centrosome. Through the microtubule cytoskeleton, also regulates the organization of cellular organelles including the Golgi and the early endosomes. Through interaction with AKAP9, involved in translocation of Golgi vesicles in epithelial cells, where microtubules are mainly non-centrosomal. Plays an important role in motile cilia function by facilitatating proper orientation of basal bodies and formation of central microtubule pairs in motile cilia. This is Calmodulin-regulated spectrin-associated protein 3 from Mus musculus (Mouse).